Consider the following 74-residue polypeptide: UPF0057 membrane protein At4g30660 (74 aa).

Helical transmembrane passes span 4–24 (NCEILCEIIIAILLPPLGVCF) and 37–57 (LVLTILGYVPGIIYAIYVIVF).

Belongs to the UPF0057 (PMP3) family.

Its subcellular location is the membrane. The sequence is that of UPF0057 membrane protein At4g30660 from Arabidopsis thaliana (Mouse-ear cress).